A 286-amino-acid polypeptide reads, in one-letter code: Pantothenate synthetase (286 aa).

30 to 37 (MGNLHSGH) is an ATP binding site. H37 serves as the catalytic Proton donor. Q61 is a (R)-pantoate binding site. Residue Q61 coordinates beta-alanine. 149 to 152 (GQKD) is an ATP binding site. Q155 contacts (R)-pantoate. Residues V178 and 186-189 (LSSR) each bind ATP.

It belongs to the pantothenate synthetase family. In terms of assembly, homodimer.

Its subcellular location is the cytoplasm. It carries out the reaction (R)-pantoate + beta-alanine + ATP = (R)-pantothenate + AMP + diphosphate + H(+). The protein operates within cofactor biosynthesis; (R)-pantothenate biosynthesis; (R)-pantothenate from (R)-pantoate and beta-alanine: step 1/1. Functionally, catalyzes the condensation of pantoate with beta-alanine in an ATP-dependent reaction via a pantoyl-adenylate intermediate. This is Pantothenate synthetase from Pseudomonas fluorescens (strain Pf0-1).